Here is a 215-residue protein sequence, read N- to C-terminus: Nucleoside triphosphate pyrophosphatase (215 aa).

Catalysis depends on D80, which acts as the Proton acceptor.

The protein belongs to the Maf family. Requires a divalent metal cation as cofactor.

Its subcellular location is the cytoplasm. It carries out the reaction a ribonucleoside 5'-triphosphate + H2O = a ribonucleoside 5'-phosphate + diphosphate + H(+). It catalyses the reaction a 2'-deoxyribonucleoside 5'-triphosphate + H2O = a 2'-deoxyribonucleoside 5'-phosphate + diphosphate + H(+). Its function is as follows. Nucleoside triphosphate pyrophosphatase. May have a dual role in cell division arrest and in preventing the incorporation of modified nucleotides into cellular nucleic acids. This is Nucleoside triphosphate pyrophosphatase from Leifsonia xyli subsp. xyli (strain CTCB07).